Here is a 426-residue protein sequence, read N- to C-terminus: Ankyrin repeat-containing protein BDA1 (426 aa).

ANK repeat units follow at residues 1–29, 36–65, 70–99, 104–134, 138–167, and 182–212; these read MDSK…DILQ, IIHT…SFAK, YGLS…SLVR, GGMT…SIKD, NGET…KMRD, and GGNT…DRNI. 4 helical membrane-spanning segments follow: residues 288–308, 329–349, 355–375, and 380–400; these read ALLV…AQLL, WGCN…LLPV, WWYF…MYMM, and FFFL…VLYV.

It localises to the cell membrane. Its function is as follows. Involved in plant defense. Required for basal resistance against Pseudomonas syringae pv. tomato DC3000. Required for resistance against nonpathogenic bacteria. May be involved in signaling components that function downstream of SNC2 and upstream of NPR1 and WRKY70 to regulate defense responses. The chain is Ankyrin repeat-containing protein BDA1 from Arabidopsis thaliana (Mouse-ear cress).